The primary structure comprises 255 residues: Small ribosomal subunit protein eS1 (255 aa).

Residues 1–18 are compositionally biased toward basic residues; the sequence is MAVGKNKRLSKGKKGLKK. Residues 1-28 form a disordered region; the sequence is MAVGKNKRLSKGKKGLKKRTQDPFSRKD. Ala-2 is modified (N-acetylalanine; partial). The span at 19–28 shows a compositional bias: basic and acidic residues; sequence RTQDPFSRKD.

It belongs to the eukaryotic ribosomal protein eS1 family. In terms of assembly, component of the small ribosomal subunit. Mature ribosomes consist of a small (40S) and a large (60S) subunit. The 40S subunit contains about 33 different proteins and 1 molecule of RNA (18S). The 60S subunit contains about 49 different proteins and 3 molecules of RNA (25S, 5.8S and 5S).

It is found in the cytoplasm. The sequence is that of Small ribosomal subunit protein eS1 from Ajellomyces capsulatus (strain NAm1 / WU24) (Darling's disease fungus).